The primary structure comprises 47 residues: Delta-ctenitoxin-Pr2d (47 aa).

5 cysteine pairs are disulfide-bonded: C3–C17, C10–C23, C14–C46, C16–C31, and C25–C29.

In terms of tissue distribution, expressed by the venom gland.

Its subcellular location is the secreted. In terms of biological role, blocks voltage-gated sodium channels (Nav). Causes rapid general spastic paralysis and death when injected in mice at dose levels of less than 2 ug per mouse. The chain is Delta-ctenitoxin-Pr2d from Phoneutria reidyi (Brazilian Amazonian armed spider).